The chain runs to 423 residues: Adenylosuccinate synthetase (423 aa).

Residues 12 to 18 (GDEGKGK) and 40 to 42 (GHT) contribute to the GTP site. Asp-13 serves as the catalytic Proton acceptor. 2 residues coordinate Mg(2+): Asp-13 and Gly-40. IMP is bound by residues 13 to 16 (DEGK), 38 to 41 (NAGH), Thr-129, Arg-143, Gln-221, Thr-236, and Arg-300. His-41 (proton donor) is an active-site residue. Residue 296–302 (AVTGRKR) participates in substrate binding. GTP is bound by residues Arg-302, 328–330 (KSD), and 408–410 (SVG).

It belongs to the adenylosuccinate synthetase family. In terms of assembly, homodimer. It depends on Mg(2+) as a cofactor.

The protein localises to the cytoplasm. It carries out the reaction IMP + L-aspartate + GTP = N(6)-(1,2-dicarboxyethyl)-AMP + GDP + phosphate + 2 H(+). The protein operates within purine metabolism; AMP biosynthesis via de novo pathway; AMP from IMP: step 1/2. In terms of biological role, plays an important role in the de novo pathway of purine nucleotide biosynthesis. Catalyzes the first committed step in the biosynthesis of AMP from IMP. The protein is Adenylosuccinate synthetase of Parabacteroides distasonis (strain ATCC 8503 / DSM 20701 / CIP 104284 / JCM 5825 / NCTC 11152).